Here is a 508-residue protein sequence, read N- to C-terminus: Photosystem II CP47 reaction center protein (508 aa).

A run of 6 helical transmembrane segments spans residues 21–36 (AVHI…WAGS), 101–115 (IVFS…IWHW), 140–156 (GIHL…FGAF), 203–218 (IAAG…FHLS), 237–252 (VLSS…AFVV), and 457–472 (SFAL…HGAR).

Belongs to the PsbB/PsbC family. PsbB subfamily. As to quaternary structure, PSII is composed of 1 copy each of membrane proteins PsbA, PsbB, PsbC, PsbD, PsbE, PsbF, PsbH, PsbI, PsbJ, PsbK, PsbL, PsbM, PsbT, PsbX, PsbY, PsbZ, Psb30/Ycf12, at least 3 peripheral proteins of the oxygen-evolving complex and a large number of cofactors. It forms dimeric complexes. The cofactor is Binds multiple chlorophylls. PSII binds additional chlorophylls, carotenoids and specific lipids..

It localises to the plastid. It is found in the chloroplast thylakoid membrane. In terms of biological role, one of the components of the core complex of photosystem II (PSII). It binds chlorophyll and helps catalyze the primary light-induced photochemical processes of PSII. PSII is a light-driven water:plastoquinone oxidoreductase, using light energy to abstract electrons from H(2)O, generating O(2) and a proton gradient subsequently used for ATP formation. This Buxus microphylla (Littleleaf boxwood) protein is Photosystem II CP47 reaction center protein.